Reading from the N-terminus, the 494-residue chain is Guanosine-5'-triphosphate,3'-diphosphate pyrophosphatase (494 aa).

Belongs to the GppA/Ppx family. GppA subfamily.

It carries out the reaction guanosine 3'-diphosphate 5'-triphosphate + H2O = guanosine 3',5'-bis(diphosphate) + phosphate + H(+). It functions in the pathway purine metabolism; ppGpp biosynthesis; ppGpp from GTP: step 2/2. Catalyzes the conversion of pppGpp to ppGpp. Guanosine pentaphosphate (pppGpp) is a cytoplasmic signaling molecule which together with ppGpp controls the 'stringent response', an adaptive process that allows bacteria to respond to amino acid starvation, resulting in the coordinated regulation of numerous cellular activities. The protein is Guanosine-5'-triphosphate,3'-diphosphate pyrophosphatase of Escherichia coli O6:H1 (strain CFT073 / ATCC 700928 / UPEC).